A 681-amino-acid chain; its full sequence is Peroxisomal acyl-coenzyme A oxidase 2 (681 aa).

A disordered region spans residues 1–28 (MGNPGDRVSLGETWSREVHPDIDSERHS). Position 9 is a phosphoserine (Ser-9). At Thr-13 the chain carries Phosphothreonine. A compositionally biased stretch (basic and acidic residues) spans 14–28 (WSREVHPDIDSERHS). An N6-succinyllysine mark is found at Lys-66, Lys-137, Lys-303, Lys-453, Lys-561, and Lys-667. The short motif at 679-681 (PKL) is the Microbody targeting signal element.

Belongs to the acyl-CoA oxidase family. As to quaternary structure, homodimer. Requires FAD as cofactor. Post-translationally, acetylation of Lys-667 is observed in liver mitochondria from fasted mice but not from fed mice.

It localises to the peroxisome. The catalysed reaction is (25R)-3alpha,7alpha,12alpha-trihydroxy-5beta-cholestan-26-oyl-CoA + A + H2O = (24R,25R)-3alpha,7alpha,12alpha,24-tetrahydroxy-5beta-cholestan-26-oyl-CoA + AH2. It catalyses the reaction (25S)-3alpha,7alpha,12alpha-trihydroxy-5beta-cholestan-26-oyl-CoA + O2 = (24E)-3alpha,7alpha,12alpha-trihydroxy-5beta-cholest-24-en-26-oyl-CoA + H2O2. Oxidizes the CoA esters of the bile acid intermediates di- and tri-hydroxycoprostanic acids. Capable of oxidizing short as well as long chain 2-methyl branched fatty acids. This chain is Peroxisomal acyl-coenzyme A oxidase 2, found in Mus musculus (Mouse).